The following is a 547-amino-acid chain: Serine/threonine-protein kinase RIO2 (547 aa).

The Protein kinase domain occupies 97–273 (VGNQMGVGKE…RDVKCIREFF (177 aa)). An ATP-binding site is contributed by Lys123. Catalysis depends on Asp228, which acts as the Proton acceptor. 6 positions are modified to phosphoserine: Ser332, Ser337, Ser350, Ser362, Ser385, and Ser390. Positions 352-385 (LEKEADPADESGGSWCCSSTDSKQIKDGGLPEES) are disordered. The Nuclear export signal signature appears at 399–408 (AVEEMERQVL). The tract at residues 404–445 (ERQVLPHRSVTEFSEESRRTENDGQPGQRSPAGSEDCDDEPP) is disordered. Phosphoserine is present on residues Ser412, Ser417, Ser433, Ser437, and Ser543.

Belongs to the protein kinase superfamily. RIO-type Ser/Thr kinase family. Associated with late 40S pre-ribosomal particles. Interacts with PLK1 (via its N-terminus). The cofactor is Mg(2+). In terms of processing, autophosphorylated (in vitro). Phosphorylation affects the timing of the metaphase-anaphase transition.

Its subcellular location is the cytoplasm. The catalysed reaction is L-seryl-[protein] + ATP = O-phospho-L-seryl-[protein] + ADP + H(+). It carries out the reaction L-threonyl-[protein] + ATP = O-phospho-L-threonyl-[protein] + ADP + H(+). Serine/threonine-protein kinase involved in the final steps of cytoplasmic maturation of the 40S ribosomal subunit. Involved in export of the 40S pre-ribosome particles (pre-40S) from the nucleus to the cytoplasm. Its kinase activity is required for the release of NOB1, PNO1 and LTV1 from the late pre-40S and the processing of 18S-E pre-rRNA to the mature 18S rRNA. May regulate the timing of the metaphase-anaphase transition during mitotic progression, and its phosphorylation, may regulate this function. This Mus musculus (Mouse) protein is Serine/threonine-protein kinase RIO2 (Riok2).